A 1031-amino-acid polypeptide reads, in one-letter code: Zinc finger protein 445 (1031 aa).

Residues 1 to 43 (MPPGRWHAAYPAQAQSSRERGRLQTVKKEEEDESYTPVQAARP) are disordered. A compositionally biased stretch (basic and acidic residues) spans 17–29 (SRERGRLQTVKKE). A Glycyl lysine isopeptide (Lys-Gly) (interchain with G-Cter in SUMO1) cross-link involves residue Lys28. Residues 55–137 (RQLFRQLRYH…ALLEELQRDL (83 aa)) enclose the SCAN box domain. The region spanning 234-304 (MTFKDVEVTF…NMQAAQPKGN (71 aa)) is the KRAB domain. Residues Lys317, Lys374, Lys375, and Lys399 each participate in a glycyl lysine isopeptide (Lys-Gly) (interchain with G-Cter in SUMO2) cross-link. 3 C2H2-type zinc fingers span residues 485–507 (FKCS…QRLH), 513–535 (FKCR…EKIH), and 541–563 (YKCD…RETH). Lys567 participates in a covalent cross-link: Glycyl lysine isopeptide (Lys-Gly) (interchain with G-Cter in SUMO2). 2 consecutive C2H2-type zinc fingers follow at residues 597 to 619 (FDCS…QRIH) and 625 to 647 (YKCT…MRLH). Lys654 participates in a covalent cross-link: Glycyl lysine isopeptide (Lys-Gly) (interchain with G-Cter in SUMO2). C2H2-type zinc fingers lie at residues 681 to 703 (FLCQ…QRIH) and 709 to 731 (YQCS…KKKH). Residues Lys736 and Lys758 each participate in a glycyl lysine isopeptide (Lys-Gly) (interchain with G-Cter in SUMO2) cross-link. C2H2-type zinc fingers lie at residues 762 to 784 (YKCS…QRVH), 790 to 812 (YKCR…QRIH), 840 to 862 (FWCQ…KGIH), 868 to 890 (YKCN…QRIH), and 896 to 918 (FKCQ…QRKH). The disordered stretch occupies residues 911–939 (LSSHQRKHTRAAQAERSPPARSSSQDTKL). Glycyl lysine isopeptide (Lys-Gly) (interchain with G-Cter in SUMO2) cross-links involve residues Lys938, Lys956, and Lys975. C2H2-type zinc fingers lie at residues 978–1000 (HKCS…KRFH) and 1006–1028 (FKCS…MKNH).

The protein belongs to the krueppel C2H2-type zinc-finger protein family.

Its subcellular location is the nucleus. Transcription regulator required to maintain maternal and paternal gene imprinting, a process by which gene expression is restricted in a parent of origin-specific manner by epigenetic modification of genomic DNA and chromatin, including DNA methylation. Acts by controlling DNA methylation during the earliest multicellular stages of development at multiple imprinting control regions (ICRs). Acts together with ZFP57, but seems to be the major factor in human early embryonic imprinting maintenance. In contrast, in mice, ZFP57 plays the predominant role in imprinting maintenance. The protein is Zinc finger protein 445 of Homo sapiens (Human).